A 155-amino-acid chain; its full sequence is Ribosomal RNA large subunit methyltransferase H (155 aa).

Residues L73, G104, and 123–128 (LSALTL) contribute to the S-adenosyl-L-methionine site.

This sequence belongs to the RNA methyltransferase RlmH family. As to quaternary structure, homodimer.

Its subcellular location is the cytoplasm. The enzyme catalyses pseudouridine(1915) in 23S rRNA + S-adenosyl-L-methionine = N(3)-methylpseudouridine(1915) in 23S rRNA + S-adenosyl-L-homocysteine + H(+). In terms of biological role, specifically methylates the pseudouridine at position 1915 (m3Psi1915) in 23S rRNA. The sequence is that of Ribosomal RNA large subunit methyltransferase H from Saccharophagus degradans (strain 2-40 / ATCC 43961 / DSM 17024).